Reading from the N-terminus, the 299-residue chain is Probable endonuclease 4 (299 aa).

9 residues coordinate Zn(2+): histidine 68, histidine 110, glutamate 145, aspartate 179, histidine 182, histidine 214, aspartate 227, histidine 229, and glutamate 259.

The protein belongs to the AP endonuclease 2 family. Zn(2+) serves as cofactor.

The catalysed reaction is Endonucleolytic cleavage to 5'-phosphooligonucleotide end-products.. In terms of biological role, endonuclease IV plays a role in DNA repair. It cleaves phosphodiester bonds at apurinic or apyrimidinic (AP) sites, generating a 3'-hydroxyl group and a 5'-terminal sugar phosphate. This Exiguobacterium sibiricum (strain DSM 17290 / CCUG 55495 / CIP 109462 / JCM 13490 / 255-15) protein is Probable endonuclease 4.